The sequence spans 452 residues: MTDRPFAALILAAGKGTRMKSDLHKVLHPIAGKPMLGHLIAAVDRLGAARKLVVTGAGREQVEAFVAPLGVEVATQEPQLGTAHAVQQGEAALADFDGDVLILYGDVPLVPAETIRRMLDRLQGEDAPVAVVLGFRPDDALAYGRILARGDGAIDDMVEYKDATTEQRAIDLCNSGLMAVRGRDLWRLLAQVGNDNAAGEYYLPDIVRIARAEGGRSVVVEAEAWEVAGVNSRAELAAVEAEWQRRRRLAAMADGATLIAPETVWFSHDTMVGRDVVIEPHVVFGPGVTIEDGVAIHGFSHVEGATVRTGAEIGPYARLRPGADIGEGAKIGNFVEVKNGRFGKGAKANHLSYIGDADVGAKANIGAGTITCNYDGFLKYRTVIGEGAFIGSNSALVAPVTIGDGAIVGAGSTVTRDVEADALAVARGKQESRTGWAARFREAMKIKKAARK.

The tract at residues 1–233 is pyrophosphorylase; the sequence is MTDRPFAALI…AWEVAGVNSR (233 aa). UDP-N-acetyl-alpha-D-glucosamine is bound by residues 11 to 14, Lys25, Gln76, 81 to 82, 104 to 106, Gly144, Glu159, Asn174, and Asn231; these read LAAG, GT, and YGD. Asp106 serves as a coordination point for Mg(2+). Residue Asn231 coordinates Mg(2+). The interval 234–254 is linker; it reads AELAAVEAEWQRRRRLAAMAD. The tract at residues 255 to 452 is N-acetyltransferase; sequence GATLIAPETV…AMKIKKAARK (198 aa). UDP-N-acetyl-alpha-D-glucosamine is bound by residues Arg320 and Lys338. The active-site Proton acceptor is His350. Residues Tyr353 and Asn364 each contribute to the UDP-N-acetyl-alpha-D-glucosamine site. Acetyl-CoA contacts are provided by residues Ala367, 373–374, Ser392, Ala410, and Arg427; that span reads NY.

The protein in the N-terminal section; belongs to the N-acetylglucosamine-1-phosphate uridyltransferase family. In the C-terminal section; belongs to the transferase hexapeptide repeat family. In terms of assembly, homotrimer. It depends on Mg(2+) as a cofactor.

Its subcellular location is the cytoplasm. The enzyme catalyses alpha-D-glucosamine 1-phosphate + acetyl-CoA = N-acetyl-alpha-D-glucosamine 1-phosphate + CoA + H(+). It carries out the reaction N-acetyl-alpha-D-glucosamine 1-phosphate + UTP + H(+) = UDP-N-acetyl-alpha-D-glucosamine + diphosphate. It participates in nucleotide-sugar biosynthesis; UDP-N-acetyl-alpha-D-glucosamine biosynthesis; N-acetyl-alpha-D-glucosamine 1-phosphate from alpha-D-glucosamine 6-phosphate (route II): step 2/2. The protein operates within nucleotide-sugar biosynthesis; UDP-N-acetyl-alpha-D-glucosamine biosynthesis; UDP-N-acetyl-alpha-D-glucosamine from N-acetyl-alpha-D-glucosamine 1-phosphate: step 1/1. It functions in the pathway bacterial outer membrane biogenesis; LPS lipid A biosynthesis. In terms of biological role, catalyzes the last two sequential reactions in the de novo biosynthetic pathway for UDP-N-acetylglucosamine (UDP-GlcNAc). The C-terminal domain catalyzes the transfer of acetyl group from acetyl coenzyme A to glucosamine-1-phosphate (GlcN-1-P) to produce N-acetylglucosamine-1-phosphate (GlcNAc-1-P), which is converted into UDP-GlcNAc by the transfer of uridine 5-monophosphate (from uridine 5-triphosphate), a reaction catalyzed by the N-terminal domain. The sequence is that of Bifunctional protein GlmU from Rhizorhabdus wittichii (strain DSM 6014 / CCUG 31198 / JCM 15750 / NBRC 105917 / EY 4224 / RW1) (Sphingomonas wittichii).